Consider the following 101-residue polypeptide: Enhancer of yellow 2 transcription factor (101 aa).

This sequence belongs to the ENY2 family. In terms of assembly, component of the nuclear pore complex (NPC)-associated AMEX complex (anchoring and mRNA export complex), composed of at least e(y)2 and xmas-2. Component of the SAGA transcription coactivator-HAT complexes, at least composed of Ada2b, e(y)2, Pcaf/Gcn5, Taf10 and Nipped-A/Trrap. Within the SAGA complex, e(y)2, Sgf11, and not/nonstop form an additional subcomplex of SAGA called the DUB module (deubiquitination module). Component of the THO complex, composed of at least e(y)2, HPR1, THO2, THOC5, THOC6 and THOC7. Interacts with e(y)1. Interacts with su(Hw) (via zinc fingers). Interacts with xmas-2; required for localization to the nuclear periphery. Interacts with the nuclear pore complex (NPC).

It is found in the nucleus. It localises to the nucleoplasm. The protein resides in the cytoplasm. Its function is as follows. Involved in mRNA export coupled transcription activation by association with both the AMEX and the SAGA complexes. The SAGA complex is a multiprotein complex that activates transcription by remodeling chromatin and mediating histone acetylation and deubiquitination. Within the SAGA complex, participates in a subcomplex that specifically deubiquitinates histone H2B. The SAGA complex is recruited to specific gene promoters by activators, where it is required for transcription. Required for nuclear receptor-mediated transactivation. Involved in transcription elongation by recruiting the THO complex onto nascent mRNA. The AMEX complex functions in docking export-competent ribonucleoprotein particles (mRNPs) to the nuclear entrance of the nuclear pore complex (nuclear basket). AMEX participates in mRNA export and accurate chromatin positioning in the nucleus by tethering genes to the nuclear periphery. This is Enhancer of yellow 2 transcription factor from Drosophila sechellia (Fruit fly).